A 189-amino-acid chain; its full sequence is Elongation factor P (189 aa).

This sequence belongs to the elongation factor P family.

It localises to the cytoplasm. The protein operates within protein biosynthesis; polypeptide chain elongation. Involved in peptide bond synthesis. Stimulates efficient translation and peptide-bond synthesis on native or reconstituted 70S ribosomes in vitro. Probably functions indirectly by altering the affinity of the ribosome for aminoacyl-tRNA, thus increasing their reactivity as acceptors for peptidyl transferase. The protein is Elongation factor P of Pseudomonas putida (strain ATCC 700007 / DSM 6899 / JCM 31910 / BCRC 17059 / LMG 24140 / F1).